The following is a 768-amino-acid chain: Probable LRR receptor-like serine/threonine-protein kinase At4g37250 (768 aa).

An N-terminal signal peptide occupies residues 1-21 (MRMELISVIFFFFCSVLSSSA). The Extracellular portion of the chain corresponds to 22 to 328 (LNSDGLVLMK…PNPRTGLRPG (307 aa)). A glycan (N-linked (GlcNAc...) asparagine) is linked at Asn-64. LRR repeat units lie at residues 67 to 90 (KVLTLSLPNSQLLGSIPSDLGSLL), 91 to 112 (TLQSLDLSNNSFNGPLPVSFFN), 115 to 137 (ELRFLDLSSNMISGEIPSAIGDL), 139 to 162 (NLLTLNLSDNALAGKLPTNLASLR), 163 to 183 (NLTVVSLENNYFSGEIPGGWR), 184 to 206 (VVEFLDLSSNLINGSLPPDFGGY), 207 to 229 (SLQYLNVSFNQISGEIPPEIGVN), and 232 to 254 (RNVTVDLSFNNLTGPIPDSPVFL). N-linked (GlcNAc...) asparagine glycosylation is present at Asn-99. N-linked (GlcNAc...) asparagine glycosylation is found at Asn-144, Asn-163, Asn-196, Asn-212, Asn-233, and Asn-242. The tract at residues 301-324 (PNTIGSNPVTDPNSQQTDPNPRTG) is disordered. The span at 303 to 320 (TIGSNPVTDPNSQQTDPN) shows a compositional bias: polar residues. A helical transmembrane segment spans residues 329 to 349 (VIIGIVVGDIAGIGILAVIFL). Over 350–768 (YIYRCKKNKI…IKSSSFHYGH (419 aa)) the chain is Cytoplasmic. A disordered region spans residues 361 to 432 (DNNNNDKQRT…NANQRSGDNK (72 aa)). Positions 378 to 387 (STFSSSSSSP) are enriched in low complexity. The segment covering 407 to 420 (PSEEEDEDDEDEES) has biased composition (acidic residues). The 308-residue stretch at 449–756 (KASAYILGAT…AVLERFHPNS (308 aa)) folds into the Protein kinase domain. Ser-451 and Ser-531 each carry phosphoserine. Thr-553 bears the Phosphothreonine mark. The residue at position 662 (Ser-662) is a Phosphoserine.

Belongs to the protein kinase superfamily. Ser/Thr protein kinase family.

Its subcellular location is the membrane. The catalysed reaction is L-seryl-[protein] + ATP = O-phospho-L-seryl-[protein] + ADP + H(+). It catalyses the reaction L-threonyl-[protein] + ATP = O-phospho-L-threonyl-[protein] + ADP + H(+). The protein is Probable LRR receptor-like serine/threonine-protein kinase At4g37250 of Arabidopsis thaliana (Mouse-ear cress).